Reading from the N-terminus, the 523-residue chain is Ubiquitin carboxyl-terminal hydrolase 22-B (523 aa).

Residues 4 to 121 (AGCSHVNSFK…KEEQRKAWKL (118 aa)) form a UBP-type zinc finger. Zn(2+)-binding residues include Cys-6, His-8, Cys-46, Cys-49, Cys-59, Cys-62, Cys-67, His-72, His-76, His-82, Cys-95, and Cys-98. Residues 174–518 (RGLINLGNTC…EGYLLFYHKQ (345 aa)) form the USP domain. Residue Cys-183 is the Nucleophile of the active site. Catalysis depends on His-477, which acts as the Proton acceptor.

This sequence belongs to the peptidase C19 family. UBP8 subfamily. In terms of assembly, component of some SAGA transcription coactivator-HAT complexes.

It localises to the nucleus. The catalysed reaction is Thiol-dependent hydrolysis of ester, thioester, amide, peptide and isopeptide bonds formed by the C-terminal Gly of ubiquitin (a 76-residue protein attached to proteins as an intracellular targeting signal).. Histone deubiquitinating component of the transcription regulatory histone acetylation (HAT) complex SAGA. Catalyzes the deubiquitination of both histones H2A and H2B, thereby acting as a coactivator. Recruited to specific gene promoters by activators, where it is required for transcription. This is Ubiquitin carboxyl-terminal hydrolase 22-B (usp22-b) from Xenopus laevis (African clawed frog).